We begin with the raw amino-acid sequence, 310 residues long: MNPHTNLNNVFDFPDLPMLLPKSEALSVTTDFSVPPVQQGAQQFHPPRNLGPQLARRWSCGDSQHADEPPASYYHNLGVALHNHFQMSNQHYLSDFDCPTTVSPISSAHETGQLPQLSPYDHIGNQDPHMFSPHAYGNSMIPDNSYFENASRSISAPNVGNSTLNPSLMSSDNAQSCGGRRRFRTNFTELQSTFLEDSFKESHYPDHKAKKYMADFLKIPEDRITVWFQNRRAKWRRKEHRQRDRTRNESFSGGSNSFDFACFSAQHPDDGPNAKHPNSFGIPNQPMSLDQFPMNTEQDFPEFPSLQEHQ.

Positions 180–239 (RRRFRTNFTELQSTFLEDSFKESHYPDHKAKKYMADFLKIPEDRITVWFQNRRAKWRRKE) form a DNA-binding region, homeobox. A disordered region spans residues 262-310 (CFSAQHPDDGPNAKHPNSFGIPNQPMSLDQFPMNTEQDFPEFPSLQEHQ). Residues 281 to 298 (GIPNQPMSLDQFPMNTEQ) are compositionally biased toward polar residues.

As to expression, expressed in the bilateral sensory neurons AWA, AWB, AWC, ASE, FLP and PVD. Also expressed in the enteric intestinal and anal depressor muscles.

It is found in the nucleus. The protein localises to the cell projection. It localises to the axon. Its subcellular location is the cytoplasm. In terms of biological role, transcriptional regulator which plays a role in the expulsion step of defecation by controlling enteric muscle-specific expression of exp-1 which is required for enteric muscle contraction. Not required for exp-1 expression in the PDA neuron. Also involved in controlling the length of the defecation cycle. In Caenorhabditis elegans, this protein is Homeobox protein dsc-1.